The chain runs to 102 residues: Cytochrome c-553 (102 aa).

The first 23 residues, 1–23 (MKRILVVMSICAALAFGVSAAMA), serve as a signal peptide directing secretion. Heme c-binding residues include C33, C36, H37, and M80.

Post-translationally, binds 1 heme c group covalently per subunit.

Its subcellular location is the periplasm. Functionally, natural electron acceptor for a formate dehydrogenase. This chain is Cytochrome c-553, found in Nitratidesulfovibrio vulgaris (strain DSM 19637 / Miyazaki F) (Desulfovibrio vulgaris).